A 258-amino-acid chain; its full sequence is Agamous-like MADS-box protein AGL3 (258 aa).

Positions 3 to 57 constitute an MADS-box domain; it reads RGKVELKRIENKINRQVTFAKRRNGLLKKAYELSVLCDAEIALLIFSNRGKLYEF. The region spanning 88-178 is the K-box domain; the sequence is LQDKYQDYLK…RRKLEDSDAA (91 aa). Residues 186–214 form a disordered region; sequence SSAAEQQQQHQQQQQGMSSYQSNPPIQEA. Residues 191–200 are compositionally biased toward low complexity; sequence QQQQHQQQQQ. Polar residues predominate over residues 201–210; it reads GMSSYQSNPP.

Forms homodimers. Interacts with TT16/AGL32. Expressed in aerial vegetative organs and flowers, but not in roots. Expressed in flower primordia.

It localises to the nucleus. Probable transcription factor that binds specifically to the CArG box DNA sequence 5'-CC (A/T)6 GG-3'. Plays an important role in the determination of flower meristem identity. Involved in the specification of sepal identity. Contributes to the development of petals, stamens and carpels. The sequence is that of Agamous-like MADS-box protein AGL3 (AGL3) from Arabidopsis thaliana (Mouse-ear cress).